The sequence spans 319 residues: Putrescine hydroxycinnamoyltransferase 2 (319 aa).

Active-site proton acceptor residues include His-160 and Asp-301.

Belongs to the plant acyltransferase family.

Functionally, hydroxycinnamoyl transferase that catalyzes the transfer of an acyl from p-coumaryol-CoA to putrescine, to produce coumaroyl putrescine. This chain is Putrescine hydroxycinnamoyltransferase 2, found in Oryza sativa subsp. japonica (Rice).